The following is a 279-amino-acid chain: Thymidylate synthase (279 aa).

Position 133–134 (133–134 (RR)) interacts with dUMP. Cysteine 154 acts as the Nucleophile in catalysis. DUMP is bound by residues 178–181 (RSND), asparagine 189, and 219–221 (HIY). Aspartate 181 contacts (6R)-5,10-methylene-5,6,7,8-tetrahydrofolate. Alanine 278 serves as a coordination point for (6R)-5,10-methylene-5,6,7,8-tetrahydrofolate.

The protein belongs to the thymidylate synthase family. Bacterial-type ThyA subfamily. As to quaternary structure, homodimer.

It is found in the cytoplasm. The catalysed reaction is dUMP + (6R)-5,10-methylene-5,6,7,8-tetrahydrofolate = 7,8-dihydrofolate + dTMP. It functions in the pathway pyrimidine metabolism; dTTP biosynthesis. Its function is as follows. Catalyzes the reductive methylation of 2'-deoxyuridine-5'-monophosphate (dUMP) to 2'-deoxythymidine-5'-monophosphate (dTMP) while utilizing 5,10-methylenetetrahydrofolate (mTHF) as the methyl donor and reductant in the reaction, yielding dihydrofolate (DHF) as a by-product. This enzymatic reaction provides an intracellular de novo source of dTMP, an essential precursor for DNA biosynthesis. In Streptococcus pyogenes serotype M12 (strain MGAS2096), this protein is Thymidylate synthase.